We begin with the raw amino-acid sequence, 419 residues long: Synaptic vesicle membrane protein VAT-1 homolog-like (419 aa).

Basic and acidic residues predominate over residues 1–25 (MAKEGVEKAEETEQMIEKEAGKEPA). 2 disordered regions span residues 1–36 (MAKE…SHRL) and 384–419 (PTPL…PFIQ). The residue at position 392 (S392) is a Phosphoserine. Phosphothreonine is present on residues T393 and T395. At S396 the chain carries Phosphoserine. The segment covering 397–407 (EAGEEEEDHEG) has biased composition (acidic residues). A compositionally biased stretch (basic and acidic residues) spans 408-419 (DSENKERMPFIQ).

The protein belongs to the zinc-containing alcohol dehydrogenase family. Quinone oxidoreductase subfamily. In terms of tissue distribution, detected in skin fibroblasts.

The chain is Synaptic vesicle membrane protein VAT-1 homolog-like (VAT1L) from Homo sapiens (Human).